The primary structure comprises 379 residues: L-lactate dehydrogenase (379 aa).

Residues 1-379 (MIISASTDYR…IGRDSLVSLP (379 aa)) form the FMN hydroxy acid dehydrogenase domain. Tyrosine 24 serves as a coordination point for substrate. FMN is bound by residues serine 106 and glutamine 127. Residue tyrosine 129 participates in substrate binding. An FMN-binding site is contributed by threonine 155. Arginine 164 serves as a coordination point for substrate. Lysine 251 is an FMN binding site. Catalysis depends on histidine 275, which acts as the Proton acceptor. Arginine 278 is a substrate binding site. 306–330 (DSGIRTGLDVVRMLALGADTVLLGR) contacts FMN.

It belongs to the FMN-dependent alpha-hydroxy acid dehydrogenase family. FMN is required as a cofactor.

Its subcellular location is the cell inner membrane. It carries out the reaction (S)-lactate + A = pyruvate + AH2. Functionally, catalyzes the conversion of L-lactate to pyruvate. Is coupled to the respiratory chain. The chain is L-lactate dehydrogenase from Stenotrophomonas maltophilia (strain K279a).